Here is a 178-residue protein sequence, read N- to C-terminus: NADH-quinone oxidoreductase subunit B (178 aa).

[4Fe-4S] cluster is bound by residues C45, C46, C111, and C140.

It belongs to the complex I 20 kDa subunit family. In terms of assembly, NDH-1 is composed of 15 different subunits. Subunits NuoB, C, D, E, F, and G constitute the peripheral sector of the complex. It depends on [4Fe-4S] cluster as a cofactor.

The protein localises to the cell membrane. It catalyses the reaction a quinone + NADH + 5 H(+)(in) = a quinol + NAD(+) + 4 H(+)(out). NDH-1 shuttles electrons from NADH, via FMN and iron-sulfur (Fe-S) centers, to quinones in the respiratory chain. The immediate electron acceptor for the enzyme in this species is believed to be a menaquinone. Couples the redox reaction to proton translocation (for every two electrons transferred, four hydrogen ions are translocated across the cytoplasmic membrane), and thus conserves the redox energy in a proton gradient. The sequence is that of NADH-quinone oxidoreductase subunit B from Deinococcus geothermalis (strain DSM 11300 / CIP 105573 / AG-3a).